Reading from the N-terminus, the 902-residue chain is Methionine--tRNA ligase, cytoplasmic (902 aa).

The GST C-terminal domain maps to 74-212 (GWEQDDLTNQ…QKQPQPQPPP (139 aa)). The 'HIGH' region signature appears at 275–285 (PYVNNVPHLGN). Positions 595–599 (KFSKS) match the 'KMSKS' region motif. Position 598 (Lys598) interacts with ATP. Ser827 is modified (phosphoserine). Residue Thr837 is modified to Phosphothreonine. The WHEP-TRS domain maps to 843–899 (HIQTLTDEVTKQGNVVRELKAQKADKNQVAAEVAKLLDLKKQLALAEGKPIETPKGK).

This sequence belongs to the class-I aminoacyl-tRNA synthetase family. As to quaternary structure, monomer. Part of a multisubunit complex that groups tRNA ligases for Arg (RARS1), Asp (DARS1), Gln (QARS1), Ile (IARS1), Leu (LARS1), Lys (KARS1), Met (MARS1) the bifunctional ligase for Glu and Pro (EPRS1) and the auxiliary subunits AIMP1/p43, AIMP2/p38 and EEF1E1/p18. Forms a linear complex that contains MARS1, EEF1E1, EPRS1 and AIMP2 that is at the core of the multisubunit complex.

The protein localises to the cytoplasm. It localises to the cytosol. The protein resides in the nucleus. Its subcellular location is the nucleolus. It carries out the reaction tRNA(Met) + L-methionine + ATP = L-methionyl-tRNA(Met) + AMP + diphosphate. Its function is as follows. Catalyzes the specific attachment of an amino acid to its cognate tRNA in a 2 step reaction: the amino acid (AA) is first activated by ATP to form AA-AMP and then transferred to the acceptor end of the tRNA. Plays a role in the synthesis of ribosomal RNA in the nucleolus. The polypeptide is Methionine--tRNA ligase, cytoplasmic (Mars1) (Mus musculus (Mouse)).